Consider the following 110-residue polypeptide: Flagellar hook-basal body complex protein FliE (110 aa).

It belongs to the FliE family.

It localises to the bacterial flagellum basal body. This Ralstonia nicotianae (strain ATCC BAA-1114 / GMI1000) (Ralstonia solanacearum) protein is Flagellar hook-basal body complex protein FliE.